The sequence spans 301 residues: Nucleotide-binding protein Helmi_06460 (301 aa).

17–24 (GLSGAGKS) provides a ligand contact to ATP. Residue 68–71 (DIRG) participates in GTP binding.

Belongs to the RapZ-like family.

Displays ATPase and GTPase activities. The polypeptide is Nucleotide-binding protein Helmi_06460 (Heliobacterium modesticaldum (strain ATCC 51547 / Ice1)).